Consider the following 216-residue polypeptide: ATP phosphoribosyltransferase (216 aa).

It belongs to the ATP phosphoribosyltransferase family. Short subfamily. In terms of assembly, heteromultimer composed of HisG and HisZ subunits.

It is found in the cytoplasm. The enzyme catalyses 1-(5-phospho-beta-D-ribosyl)-ATP + diphosphate = 5-phospho-alpha-D-ribose 1-diphosphate + ATP. It participates in amino-acid biosynthesis; L-histidine biosynthesis; L-histidine from 5-phospho-alpha-D-ribose 1-diphosphate: step 1/9. Catalyzes the condensation of ATP and 5-phosphoribose 1-diphosphate to form N'-(5'-phosphoribosyl)-ATP (PR-ATP). Has a crucial role in the pathway because the rate of histidine biosynthesis seems to be controlled primarily by regulation of HisG enzymatic activity. This chain is ATP phosphoribosyltransferase, found in Prochlorococcus marinus (strain MIT 9211).